An 87-amino-acid chain; its full sequence is Large ribosomal subunit protein bL27 (87 aa).

The disordered stretch occupies residues 1–21 (MAHKKGGGSTRNGRDSASKRL).

Belongs to the bacterial ribosomal protein bL27 family.

The sequence is that of Large ribosomal subunit protein bL27 from Amoebophilus asiaticus (strain 5a2).